Consider the following 82-residue polypeptide: Cytochrome c oxidase subunit 8, mitochondrial (82 aa).

Residues 1-31 (MFSRVALRAAPRQQPFSLVARRTFQTTRAQL) constitute a mitochondrion transit peptide. The Mitochondrial matrix segment spans residues 32 to 52 (SSPYHYPEGPRSNLPFNPKTR). Residues 53–75 (FFWFRYLMYCVVGFGSPVAIAVW) traverse the membrane as a helical segment. The Mitochondrial intermembrane portion of the chain corresponds to 76–82 (QTYRPRS).

Belongs to the cytochrome c oxidase VIIc family. Component of the cytochrome c oxidase (complex IV, CIV), a multisubunit enzyme composed of 11 subunits. The complex is composed of a catalytic core of 3 subunits Cox1, Cox2 and Cox3, encoded in the mitochondrial DNA, and 8 supernumerary subunits Cox4, Cox5a/Cox5, Cox6, Cox7, Cox8, Cox7a/Cox9, Cox6b/Cox12 and Cox6a/Cox13, which are encoded in the nuclear genome. The complex exists as a monomer or a dimer and forms respiratory supercomplexes (SCs) in the inner mitochondrial membrane with NADH-ubiquinone oxidoreductase (complex I, CI) and ubiquinol-cytochrome c oxidoreductase (cytochrome b-c1 complex, complex III, CIII), resulting in various different assemblies (supercomplexes I(1)IV(1), I(1)III(3)IV(2), III(2)IV(1) and III(2)IV(2) as well as larger supercomplexes of compositions like I(1)III(2)IV(5-6)).

It is found in the mitochondrion inner membrane. The protein operates within energy metabolism; oxidative phosphorylation. Functionally, component of the cytochrome c oxidase, the last enzyme in the mitochondrial electron transport chain which drives oxidative phosphorylation. The respiratory chain contains 3 multisubunit complexes succinate dehydrogenase (complex II, CII), ubiquinol-cytochrome c oxidoreductase (cytochrome b-c1 complex, complex III, CIII) and cytochrome c oxidase (complex IV, CIV), that cooperate to transfer electrons derived from NADH and succinate to molecular oxygen, creating an electrochemical gradient over the inner membrane that drives transmembrane transport and the ATP synthase. Cytochrome c oxidase is the component of the respiratory chain that catalyzes the reduction of oxygen to water. Electrons originating from reduced cytochrome c in the intermembrane space (IMS) are transferred via the dinuclear copper A center (CU(A)) of Cox2 and heme A of Cox1 to the active site in Cox1, a binuclear center (BNC) formed by heme A3 and copper B (CU(B)). The BNC reduces molecular oxygen to 2 water molecules using 4 electrons from cytochrome c in the IMS and 4 protons from the mitochondrial matrix. The chain is Cytochrome c oxidase subunit 8, mitochondrial (cox-15) from Neurospora crassa (strain ATCC 24698 / 74-OR23-1A / CBS 708.71 / DSM 1257 / FGSC 987).